The primary structure comprises 203 residues: Probable chemoreceptor glutamine deamidase CheD (203 aa).

Belongs to the CheD family.

The catalysed reaction is L-glutaminyl-[protein] + H2O = L-glutamyl-[protein] + NH4(+). Probably deamidates glutamine residues to glutamate on methyl-accepting chemotaxis receptors (MCPs), playing an important role in chemotaxis. This chain is Probable chemoreceptor glutamine deamidase CheD, found in Methylobacillus flagellatus (strain ATCC 51484 / DSM 6875 / VKM B-1610 / KT).